The following is a 495-amino-acid chain: UDP-glycosyltransferase 71B7 (495 aa).

Residues Ser284, 351 to 353 (APQ), 368 to 376 (HCGWNSTLE), and 390 to 393 (YAEQ) contribute to the UDP-alpha-D-glucose site.

Belongs to the UDP-glycosyltransferase family.

The chain is UDP-glycosyltransferase 71B7 (UGT71B7) from Arabidopsis thaliana (Mouse-ear cress).